Consider the following 687-residue polypeptide: Dentin sialophosphoprotein (687 aa).

The N-terminal stretch at Met1–Ala17 is a signal peptide. A disordered region spans residues Asn54–Asp113. A glycan (N-linked (GlcNAc...) asparagine) is linked at Asn55. Residue Thr57 is modified to Phosphothreonine; by CK2. Residue Asn82 is glycosylated (N-linked (GlcNAc...) asparagine). A compositionally biased stretch (polar residues) spans Ser93–Ser107. Asn128 carries N-linked (GlcNAc...) asparagine glycosylation. Basic and acidic residues predominate over residues Glu146–Thr160. The disordered stretch occupies residues Glu146–Asp687. Residues Lys161–Glu194 are compositionally biased toward polar residues. Asn189 carries an N-linked (GlcNAc...) asparagine glycan. Phosphoserine; by CK2 is present on Ser226. Ser253 is subject to Phosphoserine; by CK1. Positions Gly262 to Glu275 are enriched in basic and acidic residues. Positions Gly276–Ser292 are enriched in polar residues. Position 278 is a phosphoserine; by CK1 (Ser278). Ser292 carries the post-translational modification Phosphoserine; by CK2. Ser298 is modified (phosphoserine; by CK1). Residue Asn312 is glycosylated (N-linked (GlcNAc...) asparagine). Ser315 is modified (phosphoserine; by CK2). Phosphothreonine; by CK2 is present on residues Thr319 and Thr329. Ser337 and Ser345 each carry phosphoserine; by CK2. A compositionally biased stretch (polar residues) spans Ser352–Lys375. Ser366 is modified (phosphoserine; by CK1). The N-linked (GlcNAc...) asparagine glycan is linked to Asn369. The segment covering Ser386–Thr417 has biased composition (basic and acidic residues). Residues His418–Ser432 show a composition bias toward polar residues. A compositionally biased stretch (low complexity) spans Gly447 to Asp460. Acidic residues predominate over residues Asp500–Glu521. Positions Ser522 to Ser545 are enriched in basic and acidic residues. Positions Ser555 to Ser598 are enriched in low complexity. Over residues Asp599 to Asp617 the composition is skewed to acidic residues. Residues Ser618–Ser639 show a composition bias toward low complexity. Acidic residues predominate over residues Ser667 to Gly677. Low complexity predominate over residues Ser678–Asp687.

Interacts with FBLN7. DSP is glycosylated. As to expression, specifically expressed in teeth, mainly in odontoblasts and transiently in pre-ameloblasts.

The protein localises to the secreted. The protein resides in the extracellular space. It localises to the extracellular matrix. Functionally, DSP may be an important factor in dentinogenesis. DPP may bind high amount of calcium and facilitate initial mineralization of dentin matrix collagen as well as regulate the size and shape of the crystals. The polypeptide is Dentin sialophosphoprotein (Dspp) (Rattus norvegicus (Rat)).